The chain runs to 82 residues: M-zodatoxin-Lt3a (82 aa).

The N-terminal stretch at 1-22 (MKTYAVLLALVVAFVCIAESTG) is a signal peptide. A propeptide spanning residues 23–61 (YPVEDLEDDELTELEAEALLEDLLEDLELEDLDYNEEAR) is cleaved from the precursor. Residues 58 to 61 (EEAR) carry the Processing quadruplet motif motif. A81 carries the alanine amide modification.

It belongs to the cationic peptide 03 (latarcin) family. 03 subfamily. In terms of processing, cleavage of the propeptide depends on the processing quadruplet motif (XXXR, with at least one of X being E). Expressed by the venom gland.

The protein resides in the secreted. Its subcellular location is the target cell membrane. It has antimicrobial activity against Gram-positive bacteria (A.globiformis VKM Ac-1112 (MIC=0.3 uM), and B.subtilis VKM B-501 (MIC=1.2 uM)), Gram-negative bacteria (E.coli DH5-alpha (MIC=2.5 uM), E.coli MH1 (MIC=6.0 uM), and P.aeruginosa PAO1 (MIC&gt;40 uM)), and yeasts (P.pastoris GS115 (MIC=20 uM), and S.cerevisiae Y190 (MIC=20 uM)). Causes paralysis, but is not lethal when injected into insect (M.domestica) larvae. A second study reports antibacterial activity against E.coli (MIC=100 uM) and S.aureus (MIC=84 uM). Furthermore, increases efficacy of antibiotics (chloramphenicol, streptomycin, kanamycin, novobiocin) when tested against E.coli, probably by facilitating their incorporation into the bacteria. In Lachesana tarabaevi (Spider), this protein is M-zodatoxin-Lt3a.